The chain runs to 253 residues: MDTTVKIDARDVNFWYGDFHALKGISMEIEEKSVVAFIGPSGCGKSTFLRLFNRMNDLIPATRLTGEIRIDGENIYDKGVQVDELRKNVGMVFQRPNPFPKSIFENVAYGLRVNGVKDNAFIRQRVEETLKGAALWDEVKDKLKESAFALSGGQQQRLCIARAMAVSPSVLLMDEPASALDPISTAKVEELIHELKERYTIVIVTHNMQQAARVSDKTAFFYMGQMVEFGDTKKIFTNPEKEATQNYITGRFG.

One can recognise an ABC transporter domain in the interval I7 to I248. G39–S46 provides a ligand contact to ATP.

It belongs to the ABC transporter superfamily. Phosphate importer (TC 3.A.1.7) family. As to quaternary structure, the complex is composed of two ATP-binding proteins (PstB), two transmembrane proteins (PstC and PstA) and a solute-binding protein (PstS).

Its subcellular location is the cell inner membrane. It catalyses the reaction phosphate(out) + ATP + H2O = ADP + 2 phosphate(in) + H(+). Its function is as follows. Part of the ABC transporter complex PstSACB involved in phosphate import. Responsible for energy coupling to the transport system. This is Phosphate import ATP-binding protein PstB from Bacteroides fragilis (strain ATCC 25285 / DSM 2151 / CCUG 4856 / JCM 11019 / LMG 10263 / NCTC 9343 / Onslow / VPI 2553 / EN-2).